The primary structure comprises 710 residues: MPTSTKSKTKTTTKKKTTRKRVTPGKNLVIVESPAKAKTIEKYLGRNYKVVASVGHIRDLKKSTMSVDIENDYEPQYINIRGKAPLINSLKKEAKAAKAVYLASDPDREGEAISWHLAHILNLPLEEKNRVVFNEITKDAVKNAFKEPRQIDVDLVDAQQARRVLDRLVGYSISPILWKKVKKGLSAGRVQSIALKLIVDRENEINAFIPEEYWSIDGEFKKGTKKFKASFWGIDGKKHPLKTNEDVIKVMERLDGPDFNVDKVEKKERRRNAPLPYTTSSMQQDAANKLNFRTRKTMMVAQQLYEGLTLGSQGHQGLITYMRTDSTRISPVAQSAAHNYIADQFGEKYSKHGSKVKNASGAQDAHEAIRPSNVFNTPDAIAKYLDKDQLKLYTLIWNRFVASQMVAAIFDTVKVNLSQNGVIFIANGSQVKFDGYLRIYNDSDKSNMLPEMEENETVKKANVKPEQHFTQPPARYSEATLIKTLEENGVGRPSTYAPTLETIQKRYYVRLSAKRFEPTELGEIVNKLIVEFFPNIVNTEFTAEMEKDLDEVEEGKRQWIEVVDQFYKPFAKELENAEEGMEKIQIKDEPAGFDCDVCGSPMVIKLGRFGKFYACSNFPDCRNTKAIVKEIGVKCPLCHEGNIIERKTKKNRIFYGCDRYPDCEFTSWDKPIGRDCPKSGHFLVEKKVRGGGKQVVCSNDECDYQEEKQK.

Positions 1 to 22 (MPTSTKSKTKTTTKKKTTRKRV) are disordered. Residues 7-22 (SKTKTTTKKKTTRKRV) are compositionally biased toward basic residues. Residues 26 to 136 (KNLVIVESPA…EKNRVVFNEI (111 aa)) enclose the Toprim domain. Mg(2+)-binding residues include E32 and D105. Residues 152–574 (DVDLVDAQQA…QFYKPFAKEL (423 aa)) form the Topo IA-type catalytic domain. Positions 186-191 (SAGRVQ) are interaction with DNA. Y321 (O-(5'-phospho-DNA)-tyrosine intermediate) is an active-site residue. C4-type zinc fingers lie at residues 595 to 621 (CDVC…FPDC) and 635 to 663 (CPLC…YPDC). The C4-type 3; atypical zinc-finger motif lies at 676-702 (CPKSGHFLVEKKVRGGGKQVVCSNDEC).

The protein belongs to the type IA topoisomerase family. Monomer. The cofactor is Mg(2+).

The enzyme catalyses ATP-independent breakage of single-stranded DNA, followed by passage and rejoining.. Its function is as follows. Releases the supercoiling and torsional tension of DNA, which is introduced during the DNA replication and transcription, by transiently cleaving and rejoining one strand of the DNA duplex. Introduces a single-strand break via transesterification at a target site in duplex DNA. The scissile phosphodiester is attacked by the catalytic tyrosine of the enzyme, resulting in the formation of a DNA-(5'-phosphotyrosyl)-enzyme intermediate and the expulsion of a 3'-OH DNA strand. The free DNA strand then undergoes passage around the unbroken strand, thus removing DNA supercoils. Finally, in the religation step, the DNA 3'-OH attacks the covalent intermediate to expel the active-site tyrosine and restore the DNA phosphodiester backbone. The sequence is that of DNA topoisomerase 1 from Lactococcus lactis subsp. lactis (strain IL1403) (Streptococcus lactis).